We begin with the raw amino-acid sequence, 201 residues long: Small ribosomal subunit protein uS4 (201 aa).

Positions 19–41 (LVGGSSAYEKRPYPPGQHGRARI) are disordered. The S4 RNA-binding domain occupies 91–157 (SRLDNVVYRA…LPFEVARETA (67 aa)).

This sequence belongs to the universal ribosomal protein uS4 family. As to quaternary structure, part of the 30S ribosomal subunit. Contacts protein S5. The interaction surface between S4 and S5 is involved in control of translational fidelity.

Its function is as follows. One of the primary rRNA binding proteins, it binds directly to 16S rRNA where it nucleates assembly of the body of the 30S subunit. Functionally, with S5 and S12 plays an important role in translational accuracy. This chain is Small ribosomal subunit protein uS4, found in Mycobacteroides abscessus (strain ATCC 19977 / DSM 44196 / CCUG 20993 / CIP 104536 / JCM 13569 / NCTC 13031 / TMC 1543 / L948) (Mycobacterium abscessus).